We begin with the raw amino-acid sequence, 412 residues long: Multifunctional CCA protein (412 aa).

ATP-binding residues include glycine 8 and arginine 11. Residues glycine 8 and arginine 11 each contribute to the CTP site. Positions 21 and 23 each coordinate Mg(2+). Arginine 91, arginine 137, and arginine 140 together coordinate ATP. Residues arginine 91, arginine 137, and arginine 140 each contribute to the CTP site. Positions 228 to 329 (CGIHTLMSLQ…WRLLQRLDVL (102 aa)) constitute an HD domain.

The protein belongs to the tRNA nucleotidyltransferase/poly(A) polymerase family. Bacterial CCA-adding enzyme type 1 subfamily. In terms of assembly, monomer. Can also form homodimers and oligomers. Mg(2+) is required as a cofactor. It depends on Ni(2+) as a cofactor.

It carries out the reaction a tRNA precursor + 2 CTP + ATP = a tRNA with a 3' CCA end + 3 diphosphate. The catalysed reaction is a tRNA with a 3' CCA end + 2 CTP + ATP = a tRNA with a 3' CCACCA end + 3 diphosphate. Its function is as follows. Catalyzes the addition and repair of the essential 3'-terminal CCA sequence in tRNAs without using a nucleic acid template. Adds these three nucleotides in the order of C, C, and A to the tRNA nucleotide-73, using CTP and ATP as substrates and producing inorganic pyrophosphate. tRNA 3'-terminal CCA addition is required both for tRNA processing and repair. Also involved in tRNA surveillance by mediating tandem CCA addition to generate a CCACCA at the 3' terminus of unstable tRNAs. While stable tRNAs receive only 3'-terminal CCA, unstable tRNAs are marked with CCACCA and rapidly degraded. In Acinetobacter baumannii (strain SDF), this protein is Multifunctional CCA protein.